Here is a 101-residue protein sequence, read N- to C-terminus: Movement protein (101 aa).

Residues 30-50 (EVAVLSFVALICIYLLYLWVL) traverse the membrane as a helical segment. The interval 78 to 101 (RSPIPNTLEPTAPVHPGPFVPGSG) is disordered. Positions 90 to 101 (PVHPGPFVPGSG) are enriched in pro residues.

This sequence belongs to the mastrevirus movement protein family. As to quaternary structure, interacts with the capsid protein (CP). Part of a MP-CP-viral DNA complex.

It is found in the host membrane. Functionally, involved in the viral transport within, and between cells. This is Movement protein from Maize streak virus genotype E (isolate Pat) (MSV).